A 200-amino-acid polypeptide reads, in one-letter code: Coiled-coil domain-containing protein 28B (200 aa).

N-acetylmethionine is present on Met-1. Positions 1-10 (MDDKKKKRSP) are enriched in basic residues. Residues 1–49 (MDDKKKKRSPKPCLAQPAQAPGTLRRVPVPTSHSGSLALGLPHLPSPKQ) form a disordered region. Residues Ser-46 and Ser-115 each carry the phosphoserine modification. The segment covering 141-152 (EEEDDEEEEDGV) has biased composition (acidic residues). The interval 141–164 (EEEDDEEEEDGVTEGLPEEQKKTM) is disordered. Positions 158 to 183 (EEQKKTMADRNLDQLLSNLEDLSNSI) form a coiled coil.

In terms of assembly, interacts with BBS1, BBS2, BBS4, BBS5, BBS6, BBS7 and TTC8/BBS8. Interacts with MAPKAP1/SIN1 isoform 1 and RICTOR.

Its subcellular location is the cytoplasm. It localises to the cytoskeleton. It is found in the microtubule organizing center. The protein localises to the centrosome. Its function is as follows. Involved in ciliogenesis. Regulates cilia length through its interaction with MAPKAP1/SIN1 but independently of mTORC2 complex. Modulates mTORC2 complex assembly and function, possibly enhances AKT1 phosphorylation. Does not seem to modulate assembly and function of mTORC1 complex. This chain is Coiled-coil domain-containing protein 28B (CCDC28B), found in Homo sapiens (Human).